A 133-amino-acid chain; its full sequence is CDGSH iron-sulfur domain-containing protein 2 homolog (133 aa).

Residues 1 to 35 lie on the Lumenal side of the membrane; the sequence is MQSVSQVVKTSLPNYLSSLPVPDTFGGWFKLSFKD. Residues 36–58 form a helical membrane-spanning segment; sequence WLALIPPTAVVVGIGYVTYRAFY. The Cytoplasmic portion of the chain corresponds to 59–133; the sequence is PKAHRTCKSG…NVGPIVIKKK (75 aa). [2Fe-2S] cluster contacts are provided by Cys-99, Cys-101, Cys-110, and His-114.

Belongs to the CISD protein family. CISD2 subfamily. It depends on [2Fe-2S] cluster as a cofactor.

The protein resides in the endoplasmic reticulum membrane. This Drosophila virilis (Fruit fly) protein is CDGSH iron-sulfur domain-containing protein 2 homolog.